Here is a 343-residue protein sequence, read N- to C-terminus: MKILGIETSCDDTSVAIYDKKLGLIDHQTLNQNSVHSKYHGIVPELAARSHLNQLNFLIKNIFSKYFLYNSSNFKKKFFKAVAYTVGPGLSGSIVVHSCRSIALSLDIPYILINHLEGHLLSVMLSYKKNLFPFLALLVSGANTQLIYAKYLGKYIILGQTLDDAVGNVFDYIAKILGLGFPGGKNLSDLAKYGISGKYFFPRPMTKYSNLNFSFSGLKTHVKNVILNSSDSFQEKSNIAKSFEEAIVDTLIIKCKLAIKKIKVKNFLVCGGVSSNRLLRIKLKKLIYKNQRKLYFSKKKFCTDNAGMIAYLGFLKYQQGMYSYNKSFSIYPNLLISDNINYL.

His-115 and His-119 together coordinate Fe cation. Residues 138–142, Asp-171, Gly-184, and Asn-276 contribute to the substrate site; that span reads LVSGA. Asp-304 contacts Fe cation.

It belongs to the KAE1 / TsaD family. Fe(2+) serves as cofactor.

Its subcellular location is the cytoplasm. The catalysed reaction is L-threonylcarbamoyladenylate + adenosine(37) in tRNA = N(6)-L-threonylcarbamoyladenosine(37) in tRNA + AMP + H(+). Functionally, required for the formation of a threonylcarbamoyl group on adenosine at position 37 (t(6)A37) in tRNAs that read codons beginning with adenine. Is involved in the transfer of the threonylcarbamoyl moiety of threonylcarbamoyl-AMP (TC-AMP) to the N6 group of A37, together with TsaE and TsaB. TsaD likely plays a direct catalytic role in this reaction. This chain is tRNA N6-adenosine threonylcarbamoyltransferase, found in Buchnera aphidicola subsp. Cinara cedri (strain Cc).